Here is a 492-residue protein sequence, read N- to C-terminus: V-type proton ATPase subunit B 1 (492 aa).

This sequence belongs to the ATPase alpha/beta chains family. As to quaternary structure, V-ATPase is a heteromultimeric enzyme composed of a peripheral catalytic V1 complex (main components: subunits A, B, C, D, E, and F) attached to an integral membrane V0 proton pore complex (main component: the proteolipid protein).

Its function is as follows. Non-catalytic subunit of the peripheral V1 complex of vacuolar ATPase. V-ATPase is responsible for acidifying a variety of intracellular compartments in eukaryotic cells. The sequence is that of V-type proton ATPase subunit B 1 from Acetabularia acetabulum (Mermaid's wine glass).